The following is a 219-amino-acid chain: MAEISAKMVQELREKTGAGMMDCKKALTEAGGDLAKAEEVLRKKGLSAAAKKTGRAATEGAVASYIHMGGKIGVLVEVNCETDFVARTEGFQGLVKEIAMQIAAASPRWVRREEVPADVVAKELEIAKAQAREQKKPEAILEKIATGKVEKFYSEFCLMEQAWVKDDKKKIQDVLTDAVAKIGENIQIRRFARFVLGEGLEKKQENLAEEVAKAAGLQK.

Residues 82 to 85 (TDFV) are involved in Mg(2+) ion dislocation from EF-Tu.

It belongs to the EF-Ts family.

The protein resides in the cytoplasm. Functionally, associates with the EF-Tu.GDP complex and induces the exchange of GDP to GTP. It remains bound to the aminoacyl-tRNA.EF-Tu.GTP complex up to the GTP hydrolysis stage on the ribosome. The sequence is that of Elongation factor Ts from Anaeromyxobacter sp. (strain K).